The following is a 513-amino-acid chain: Homeobox and leucine zipper protein Homez (513 aa).

The segment at residues 31–90 (WTQAVQTSELDGNEHLLQAFSYFPYPSLADIALLCLRHGLQMEKVKTWFMAQRLRCGISW) is a DNA-binding region (homeobox 1). Residues Lys156, Lys174, and Lys176 each participate in a glycyl lysine isopeptide (Lys-Gly) (interchain with G-Cter in SUMO2) cross-link. 5 disordered regions span residues 200–221 (LSKE…ASWN), 241–287 (SCKE…SFSP), 303–328 (RLRN…HQRK), 402–429 (PAIS…PPPD), and 480–513 (LDEE…IIRD). Residues 205-217 (AGGGPDQSCGGGT) show a composition bias toward gly residues. Low complexity predominate over residues 248–260 (PSGTPPSSSASSP). Ser320 bears the Phosphoserine mark. DNA-binding regions (homeobox) lie at residues 324–384 (QHQR…KHGQ) and 418–477 (TPPL…AEVV). The short motif at 327 to 332 (RKTKRK) is the Nuclear localization signal element. Phosphothreonine is present on Thr418. Pro residues predominate over residues 419–429 (PPLPAPPPPPD).

As to quaternary structure, homodimer or heterodimer (Potential). Interacts with HOXC8.

It localises to the nucleus. Functionally, may function as a transcriptional regulator. This chain is Homeobox and leucine zipper protein Homez (Homez), found in Rattus norvegicus (Rat).